Here is a 118-residue protein sequence, read N- to C-terminus: Late cornified envelope protein 1E (118 aa).

Low complexity predominate over residues 1–10; it reads MSCQQSQQQC. Disordered regions lie at residues 1–23 and 84–118; these read MSCQ…CPPK and RSHR…GGCC. The segment covering 11–23 has biased composition (pro residues); that stretch reads QPPPKCTPKCPPK. The span at 92–103 shows a compositional bias: low complexity; that stretch reads SSDCCSQPSGGS. Residues 104-118 show a composition bias toward gly residues; sequence SCCGGGSGQHSGGCC.

It belongs to the LCE family. Interacts with CYSRT1. Skin-specific. Expression was readily detected in adult trunk skin, adult arm skin, fetal skin, penal skin, vulva, esophagus and tongue. Not expressed in the cervix, rectum, lung, colon, or placenta.

In terms of biological role, precursors of the cornified envelope of the stratum corneum. This is Late cornified envelope protein 1E (LCE1E) from Homo sapiens (Human).